A 168-amino-acid polypeptide reads, in one-letter code: Large ribosomal subunit protein uL10 (168 aa).

It belongs to the universal ribosomal protein uL10 family. As to quaternary structure, part of the ribosomal stalk of the 50S ribosomal subunit. The N-terminus interacts with L11 and the large rRNA to form the base of the stalk. The C-terminus forms an elongated spine to which L12 dimers bind in a sequential fashion forming a multimeric L10(L12)X complex.

Its function is as follows. Forms part of the ribosomal stalk, playing a central role in the interaction of the ribosome with GTP-bound translation factors. This Acinetobacter baumannii (strain AB307-0294) protein is Large ribosomal subunit protein uL10.